The sequence spans 156 residues: Small ribosomal subunit protein uS7 (156 aa).

It belongs to the universal ribosomal protein uS7 family. In terms of assembly, part of the 30S ribosomal subunit. Contacts proteins S9 and S11.

Its function is as follows. One of the primary rRNA binding proteins, it binds directly to 16S rRNA where it nucleates assembly of the head domain of the 30S subunit. Is located at the subunit interface close to the decoding center, probably blocks exit of the E-site tRNA. This chain is Small ribosomal subunit protein uS7, found in Alkalilimnicola ehrlichii (strain ATCC BAA-1101 / DSM 17681 / MLHE-1).